The following is a 66-amino-acid chain: Moricin-1 (66 aa).

The first 24 residues, 1-24, serve as a signal peptide directing secretion; that stretch reads MNILKFFFVFIVAMSLVSCSTAAP.

Expressed in fat body and to a lesser extent in hemocyte and Malpighian tubules.

It localises to the secreted. In terms of biological role, has antibacterial activity against Gram-positive and Gram-negative bacteria. Probably acts by disturbing membrane functions with its amphipathic structure. The sequence is that of Moricin-1 (MOR1) from Bombyx mori (Silk moth).